We begin with the raw amino-acid sequence, 156 residues long: Small ribosomal subunit protein uS7 (156 aa).

This sequence belongs to the universal ribosomal protein uS7 family. In terms of assembly, part of the 30S ribosomal subunit. Contacts proteins S9 and S11.

Functionally, one of the primary rRNA binding proteins, it binds directly to 16S rRNA where it nucleates assembly of the head domain of the 30S subunit. Is located at the subunit interface close to the decoding center, probably blocks exit of the E-site tRNA. This Geotalea uraniireducens (strain Rf4) (Geobacter uraniireducens) protein is Small ribosomal subunit protein uS7.